The chain runs to 284 residues: Tropomyosin (284 aa).

A coiled-coil region spans residues 1-284 (MDAIKKKMLM…DQALNELHNM (284 aa)). Disordered regions lie at residues 106–134 (LNST…ENRQ) and 186–221 (AETK…EEAY). 2 stretches are compositionally biased toward basic and acidic residues: residues 112–134 (KLTD…ENRQ) and 186–198 (AETK…DELK).

The protein belongs to the tropomyosin family. In terms of assembly, homodimer.

Functionally, tropomyosin, in association with the troponin complex, plays a central role in the calcium dependent regulation of muscle contraction. This Branchiostoma belcheri (Amphioxus) protein is Tropomyosin (TPM).